Here is a 270-residue protein sequence, read N- to C-terminus: Undecaprenyl-diphosphatase 1 (270 aa).

Helical transmembrane passes span 79-99 (NLLL…LLFS), 105-125 (VLFN…IILW), 155-175 (LALI…LFLG), 182-202 (TEFS…YSLI), 215-235 (VFAV…RALL), and 242-262 (SFAV…GTWW).

This sequence belongs to the UppP family.

It localises to the cell inner membrane. It carries out the reaction di-trans,octa-cis-undecaprenyl diphosphate + H2O = di-trans,octa-cis-undecaprenyl phosphate + phosphate + H(+). Catalyzes the dephosphorylation of undecaprenyl diphosphate (UPP). Confers resistance to bacitracin. The polypeptide is Undecaprenyl-diphosphatase 1 (Chromobacterium violaceum (strain ATCC 12472 / DSM 30191 / JCM 1249 / CCUG 213 / NBRC 12614 / NCIMB 9131 / NCTC 9757 / MK)).